A 454-amino-acid polypeptide reads, in one-letter code: Dihydrolipoyllysine-residue succinyltransferase component of 2-oxoglutarate dehydrogenase complex, mitochondrial (454 aa).

The transit peptide at methionine 1 to lysine 68 directs the protein to the mitochondrion. The Lipoyl-binding domain maps to valine 71–arginine 145. Serine 82 is modified (phosphoserine). Lysine 111 is subject to N6-lipoyllysine. The disordered stretch occupies residues threonine 147–lysine 227. A compositionally biased stretch (low complexity) spans alanine 149–alanine 163. Position 155 is an N6-acetyllysine (lysine 155). Pro residues predominate over residues proline 186–serine 197. The segment covering lysine 198–alanine 217 has biased composition (low complexity). 5 positions are modified to N6-acetyllysine: lysine 268, lysine 273, lysine 274, lysine 278, and lysine 308. Catalysis depends on residues histidine 425 and aspartate 429.

Belongs to the 2-oxoacid dehydrogenase family. As to quaternary structure, the 2-oxoglutarate dehydrogenase complex is composed of OGDH (2-oxoglutarate dehydrogenase; E1), DLST (dihydrolipoamide succinyltransferase; E2), DLD (dihydrolipoamide dehydrogenase; E3) and the assembly factor KGD4. It contains multiple copies of the three enzymatic components (E1, E2 and E3). In the nucleus, the 2-oxoglutarate dehydrogenase complex associates with KAT2A. Interacts with ABHD11; this interaction maintains the functional lipoylation of the 2-oxoglutarate dehydrogenase complex. Requires (R)-lipoate as cofactor.

Its subcellular location is the mitochondrion matrix. The protein resides in the nucleus. It catalyses the reaction N(6)-[(R)-dihydrolipoyl]-L-lysyl-[protein] + succinyl-CoA = N(6)-[(R)-S(8)-succinyldihydrolipoyl]-L-lysyl-[protein] + CoA. Its pathway is amino-acid degradation; L-lysine degradation via saccharopine pathway; glutaryl-CoA from L-lysine: step 6/6. It participates in carbohydrate metabolism; tricarboxylic acid cycle. Functionally, dihydrolipoamide succinyltransferase (E2) component of the 2-oxoglutarate dehydrogenase complex. The 2-oxoglutarate dehydrogenase complex catalyzes the overall conversion of 2-oxoglutarate to succinyl-CoA and CO(2). The 2-oxoglutarate dehydrogenase complex is mainly active in the mitochondrion. A fraction of the 2-oxoglutarate dehydrogenase complex also localizes in the nucleus and is required for lysine succinylation of histones: associates with KAT2A on chromatin and provides succinyl-CoA to histone succinyltransferase KAT2A. This is Dihydrolipoyllysine-residue succinyltransferase component of 2-oxoglutarate dehydrogenase complex, mitochondrial from Mus musculus (Mouse).